Reading from the N-terminus, the 135-residue chain is Retinol-binding protein 1 (135 aa).

Residue tryptophan 9 is modified to Omega-N-methylarginine. Positions arginine 22–lysine 32 are important for interaction with STRA6. Residues lysine 41, methionine 63, and glutamine 109 each contribute to the all-trans-retinol site.

The protein belongs to the calycin superfamily. Fatty-acid binding protein (FABP) family. As to quaternary structure, interacts (only as retinol-free apoprotein) with STRA6. As to expression, detected in nearly all the tissues with higher expression in adult ovary, pancreas, pituitary gland and adrenal gland, and fetal liver.

It localises to the cytoplasm. Its subcellular location is the lipid droplet. In terms of biological role, cytoplasmic retinol-binding protein. Accepts retinol from the transport protein STRA6, and thereby contributes to retinol uptake, storage and retinoid homeostasis. The sequence is that of Retinol-binding protein 1 (RBP1) from Homo sapiens (Human).